The following is a 193-amino-acid chain: MELKIKKAELEGIYVDINQLPVGNIPEIALAGRSNVGKSSLINKICNRKNLAKSSSTPGKTRTINYYLINDQWFMVDLPGYGYARVSREEKARWKKMVEAYLSQREQLRGVIQLLDIRHEPGENDILMKDWLLHLQIPVLVVATKADKLSRGARMKHIAIIRKTLDLPEMPLVFSAQSGDGVEELKAALAELL.

The 170-residue stretch at 24–193 (NIPEIALAGR…ELKAALAELL (170 aa)) folds into the EngB-type G domain. GTP-binding positions include 32 to 39 (GRSNVGKS), 59 to 63 (GKTRT), 77 to 80 (DLPG), 144 to 147 (TKAD), and 174 to 176 (FSA). The Mg(2+) site is built by serine 39 and threonine 61.

This sequence belongs to the TRAFAC class TrmE-Era-EngA-EngB-Septin-like GTPase superfamily. EngB GTPase family. Mg(2+) serves as cofactor.

Necessary for normal cell division and for the maintenance of normal septation. The polypeptide is Probable GTP-binding protein EngB (Syntrophomonas wolfei subsp. wolfei (strain DSM 2245B / Goettingen)).